The sequence spans 834 residues: DIS3-like exonuclease 2 (834 aa).

Over residues 1–23 the composition is skewed to polar residues; the sequence is MHNSEFLSPVQSGTQRGTNRSIL. Residues 1 to 35 are disordered; sequence MHNSEFLSPVQSGTQRGTNRSILNNKKSGKGKKKS. The Mg(2+) site is built by Asp354 and Asp363.

It belongs to the RNR ribonuclease family. DIS3L2 subfamily. It depends on Mg(2+) as a cofactor. Requires Mn(2+) as cofactor.

It is found in the cytoplasm. It localises to the P-body. In terms of biological role, 3'-5'-exoribonuclease that specifically recognizes RNAs polyuridylated at their 3' end and mediates their degradation. Component of an exosome-independent RNA degradation pathway that mediates degradation of both mRNAs and miRNAs that have been polyuridylated by a terminal uridylyltransferase. Essential for correct mitosis, and negatively regulates cell proliferation. This chain is DIS3-like exonuclease 2, found in Xenopus tropicalis (Western clawed frog).